The sequence spans 526 residues: Peptide chain release factor 3 (526 aa).

The tr-type G domain maps to 8–277; sequence NKRRTFAIIS…GLTEWAPKPQ (270 aa). GTP-binding positions include 17-24, 85-89, and 139-142; these read SHPDAGKT, DTPGH, and NKLD.

Belongs to the TRAFAC class translation factor GTPase superfamily. Classic translation factor GTPase family. PrfC subfamily.

It is found in the cytoplasm. In terms of biological role, increases the formation of ribosomal termination complexes and stimulates activities of RF-1 and RF-2. It binds guanine nucleotides and has strong preference for UGA stop codons. It may interact directly with the ribosome. The stimulation of RF-1 and RF-2 is significantly reduced by GTP and GDP, but not by GMP. In Haemophilus ducreyi (strain 35000HP / ATCC 700724), this protein is Peptide chain release factor 3.